A 320-amino-acid chain; its full sequence is Phosphate acyltransferase (320 aa).

Belongs to the PlsX family. As to quaternary structure, homodimer. Probably interacts with PlsY.

Its subcellular location is the cytoplasm. It catalyses the reaction a fatty acyl-[ACP] + phosphate = an acyl phosphate + holo-[ACP]. It functions in the pathway lipid metabolism; phospholipid metabolism. Catalyzes the reversible formation of acyl-phosphate (acyl-PO(4)) from acyl-[acyl-carrier-protein] (acyl-ACP). This enzyme utilizes acyl-ACP as fatty acyl donor, but not acyl-CoA. The sequence is that of Phosphate acyltransferase from Syntrophomonas wolfei subsp. wolfei (strain DSM 2245B / Goettingen).